We begin with the raw amino-acid sequence, 225 residues long: Ribonuclease 3 (225 aa).

In terms of domain architecture, RNase III spans Leu7 to Asp129. Glu42 serves as a coordination point for Mg(2+). Residue Asp46 is part of the active site. Positions 115 and 118 each coordinate Mg(2+). The active site involves Glu118. A DRBM domain is found at Asp155 to Lys225.

This sequence belongs to the ribonuclease III family. In terms of assembly, homodimer. It depends on Mg(2+) as a cofactor.

It is found in the cytoplasm. It carries out the reaction Endonucleolytic cleavage to 5'-phosphomonoester.. Digests double-stranded RNA. Involved in the processing of primary rRNA transcript to yield the immediate precursors to the large and small rRNAs (23S and 16S). Processes some mRNAs, and tRNAs when they are encoded in the rRNA operon. Processes pre-crRNA and tracrRNA of type II CRISPR loci if present in the organism. This Shewanella loihica (strain ATCC BAA-1088 / PV-4) protein is Ribonuclease 3.